The primary structure comprises 156 residues: Persephin (156 aa).

Positions 1–21 (MAAGRLRILFLLLLSLHLGLG) are cleaved as a signal peptide. Cystine bridges form between Cys66–Cys124, Cys93–Cys152, and Cys97–Cys154.

This sequence belongs to the TGF-beta family. GDNF subfamily. Homodimer; disulfide-linked. Interacts with GFRA4 coreceptor and RET: forms a 2:2:2 ternary complex composed of PSPN ligand, GFRA4 and RET receptor. In terms of tissue distribution, expressed at low levels in substantia nigra. Cochlea.

It is found in the secreted. Its function is as follows. Growth factor that exhibits neurotrophic activity on mesencephalic dopaminergic and motor neurons. Acts by binding to its coreceptor, GFRA4, leading to autophosphorylation and activation of the RET receptor. The polypeptide is Persephin (Rattus norvegicus (Rat)).